Reading from the N-terminus, the 844-residue chain is Janus kinase and microtubule-interacting protein 3 (844 aa).

Positions 8–258 form a coiled coil; that stretch reads SRAKGDKAEA…QLSQVREADR (251 aa). Residues 250–290 are disordered; the sequence is LSQVREADRHPGSPRRELPHAAGAGDASDHSGSPEQQLDEK. Residues 254 to 268 show a composition bias toward basic and acidic residues; the sequence is READRHPGSPRRELP. The segment covering 269-282 has biased composition (low complexity); that stretch reads HAAGAGDASDHSGS. Residues 289 to 421 adopt a coiled-coil conformation; sequence EKDARRFQLK…DELSKTLETA (133 aa). S384 carries the phosphoserine modification. Positions 466–483 are enriched in polar residues; the sequence is SDGSSVSYQTDRTDQTPC. The tract at residues 466–489 is disordered; sequence SDGSSVSYQTDRTDQTPCTPDDDL. Coiled coils occupy residues 493–621 and 683–834; these read MAKE…RERK and VLTL…FLFL.

This sequence belongs to the JAKMIP family. As to expression, specifically expressed in the CNS and endocrine tissues. Also detected in other tissues including heart, testis and prostate.

It is found in the golgi apparatus. The chain is Janus kinase and microtubule-interacting protein 3 (JAKMIP3) from Homo sapiens (Human).